Reading from the N-terminus, the 322-residue chain is 5'-AMP-activated protein kinase subunit gamma (322 aa).

4 consecutive CBS domains span residues 37–97 (VSYR…NPDK), 118–181 (VDQL…CRET), 194–253 (ITQD…YNDL), and 262–322 (MRRS…LGSN). ADP is bound by residues isoleucine 42, arginine 146, 166–169 (TQYR), and threonine 195. AMP-binding positions include threonine 195, lysine 200, and 221–222 (SS). Residues threonine 195, lysine 200, and 221–222 (SS) contribute to the ATP site. Residues 221 to 222 (SS), 291 to 293 (RVH), and 309 to 312 (TLSD) each bind ADP. 309 to 312 (TLSD) is a binding site for AMP. 309–312 (TLSD) serves as a coordination point for ATP.

This sequence belongs to the 5'-AMP-activated protein kinase gamma subunit family. AMPK is a heterotrimer of an alpha catalytic subunit (SNF1), a beta (SIP1, SIP2 or GAL83) and a gamma non-catalytic subunits (SNF4). Note=Interaction between SNF1 and SNF4 is inhibited by high levels of glucose.

It localises to the nucleus. The protein localises to the cytoplasm. In terms of biological role, adenine nucleotides-binding subunit gamma of AMP-activated protein kinase (AMPK), an energy sensor protein kinase that plays a key role in regulating cellular energy metabolism. In response to reduction of intracellular ATP levels, AMPK activates energy-producing pathways and inhibits energy-consuming processes: inhibits protein, carbohydrate and lipid biosynthesis, as well as cell growth and proliferation. AMPK acts via direct phosphorylation of metabolic enzymes, and by longer-term effects via phosphorylation of transcription regulators. Gamma non-catalytic subunit mediates binding to AMP, ADP and ATP, leading to activate or inhibit AMPK: AMP-binding results in allosteric activation of alpha catalytic subunit (SNF1) both by inducing phosphorylation and preventing dephosphorylation of catalytic subunits. This is 5'-AMP-activated protein kinase subunit gamma (SNF4) from Saccharomyces cerevisiae (strain ATCC 204508 / S288c) (Baker's yeast).